Reading from the N-terminus, the 562-residue chain is Arginine--tRNA ligase (562 aa).

Positions 126 to 136 (ANPTGPLNVGH) match the 'HIGH' region motif.

The protein belongs to the class-I aminoacyl-tRNA synthetase family. In terms of assembly, monomer.

Its subcellular location is the cytoplasm. It carries out the reaction tRNA(Arg) + L-arginine + ATP = L-arginyl-tRNA(Arg) + AMP + diphosphate. This is Arginine--tRNA ligase from Salinibacter ruber (strain DSM 13855 / M31).